Reading from the N-terminus, the 864-residue chain is Leucine--tRNA ligase (864 aa).

A 'HIGH' region motif is present at residues 57-67; sequence PYPSGNLHMGH. The 'KMSKS' region motif lies at 628-632; that stretch reads KMSKS. Lys-631 lines the ATP pocket.

The protein belongs to the class-I aminoacyl-tRNA synthetase family.

The protein localises to the cytoplasm. The catalysed reaction is tRNA(Leu) + L-leucine + ATP = L-leucyl-tRNA(Leu) + AMP + diphosphate. This chain is Leucine--tRNA ligase, found in Prochlorococcus marinus (strain MIT 9515).